A 119-amino-acid chain; its full sequence is Large ribosomal subunit protein uL22 (119 aa).

This sequence belongs to the universal ribosomal protein uL22 family. As to quaternary structure, part of the 50S ribosomal subunit.

This protein binds specifically to 23S rRNA; its binding is stimulated by other ribosomal proteins, e.g. L4, L17, and L20. It is important during the early stages of 50S assembly. It makes multiple contacts with different domains of the 23S rRNA in the assembled 50S subunit and ribosome. In terms of biological role, the globular domain of the protein is located near the polypeptide exit tunnel on the outside of the subunit, while an extended beta-hairpin is found that lines the wall of the exit tunnel in the center of the 70S ribosome. This is Large ribosomal subunit protein uL22 from Chlorobium phaeovibrioides (strain DSM 265 / 1930) (Prosthecochloris vibrioformis (strain DSM 265)).